A 234-amino-acid chain; its full sequence is MITAIVLAGGVGKRMGMEIPKQFVMVNEKPIIIYTLESFDRHPKIDQVVVVCKQGWADTMWGYIREFGIKKVKWVISGGSIVQKSINNAVQFLSDKCVEDDIVVIHDGIRPLVDEHVLSDVIVKCQEYGNAVTSLPYNEQIFIKETEKTTNKYIDRNTLRRVSTPQAYKYEVLHDAYDEAISQNIGMVDSAYTNTMMVDLGHTLYFAAGSDKNIKLTTTDDLALFKAYLREKEL.

CTP is bound by residues Leu7–Gly10 and Gly79–Ser85.

It belongs to the IspD/TarI cytidylyltransferase family. TarI subfamily.

It carries out the reaction D-ribitol 5-phosphate + CTP + H(+) = CDP-L-ribitol + diphosphate. It participates in cell wall biogenesis; poly(ribitol phosphate) teichoic acid biosynthesis. Its function is as follows. Catalyzes the transfer of the cytidylyl group of CTP to D-ribitol 5-phosphate. This chain is Ribitol-5-phosphate cytidylyltransferase, found in Lacticaseibacillus paracasei (strain ATCC 334 / BCRC 17002 / CCUG 31169 / CIP 107868 / KCTC 3260 / NRRL B-441) (Lactobacillus paracasei).